A 503-amino-acid polypeptide reads, in one-letter code: LEM domain-containing protein 2 (503 aa).

Position 2 is an N-acetylalanine (A2). Residues 2 to 42 enclose the LEM domain; that stretch reads AGLSDLELRRELQALGFQPGPITDTTRDVYRNKLRRLRGEA. The span at 42–74 shows a compositional bias: basic and acidic residues; that stretch reads ARLRDEERLREEARPRGEERLREEARLREDAPL. 2 disordered regions span residues 42–97 and 127–157; these read ARLR…SGSA and AQLR…GPGL. The segment at 74–130 is required for nuclear retention and interaction with LMNA isoform C; that stretch reads LRARPAAASPRAEPWLSQPASGSAYATPGAYGDIRPSAASWVGSRGLAYPARPAQLR. A compositionally biased stretch (low complexity) spans 75-87; sequence RARPAAASPRAEP. A phosphoserine mark is found at S166 and S175. Positions 172 to 198 are disordered; the sequence is LPSSLLGPDPRPGLRATRAGPAGAARA. Residues 184–197 show a composition bias toward low complexity; it reads GLRATRAGPAGAAR. The next 2 helical transmembrane spans lie at 213 to 233 and 377 to 397; these read LLLW…WVKM and VTNV…LILL. Residues 395-503 form a winged-Helix (WH) region; it reads ILLKYRWRKL…KPSSFSDSER (109 aa). S497, S499, and S501 each carry phosphoserine.

As to quaternary structure, interacts (via N-terminus) with LMNA isoform C (via C-terminus) (in vitro). Interacts (via LEM domain) with BANF1. Interacts (via C-terminus) with CHMP7. Interacts (via N-terminus) with tubulin; the interaction causes microtubule bundling and stabilization (in vitro). Phosphorylated; strongly phosphorylated in mitosis compared to G1/S. In terms of tissue distribution, ubiquitously expressed, including bone marrow, brain, kidney, colon, skeletal muscle, thymus, testis and uterus.

The protein resides in the nucleus inner membrane. Its subcellular location is the nucleus envelope. The protein localises to the cytoplasm. It localises to the cytoskeleton. It is found in the spindle. Functionally, nuclear lamina-associated inner nuclear membrane protein that is involved in nuclear structure organization, maintenance of nuclear envelope (NE) integrity and NE reformation after mitosis. Plays a role as transmembrane adapter for the endosomal sorting complexes required for transport (ESCRT), and is thereby involved in ESCRT-mediated NE reformation. Promotes ESCRT-mediated NE closure by recruiting CHMP7 and downstream ESCRT-III proteins IST1/CHMP8 and CHMP2A to the reforming NE during anaphase. During nuclear reassembly, condenses into a liquid-like coating around microtubule spindles and coassembles with CHMP7 to form a macromolecular O-ring seal at the confluence between membranes, chromatin, and the spindle to facilitate early nuclear sealing. Plays a role in the organization of heterochromatin associated with the NE and in the maintenance of NE organization under mechanical stress. Required for embryonic development and involved in regulation of several signaling pathways such as MAPK and AKT. Required for myoblast differentiation involving regulation of ERK signaling. Essential for cardiac homeostasis and proper heart function. The polypeptide is LEM domain-containing protein 2 (LEMD2) (Homo sapiens (Human)).